The primary structure comprises 499 residues: Protein nucleotidyltransferase YdiU (499 aa).

The ATP site is built by Gly95, Gly97, Arg98, Lys117, Asp129, Gly130, Arg180, and Arg187. The active-site Proton acceptor is the Asp256. Mg(2+) contacts are provided by Asn257 and Asp266. Asp266 contacts ATP.

This sequence belongs to the SELO family. The cofactor is Mg(2+). Requires Mn(2+) as cofactor.

It catalyses the reaction L-seryl-[protein] + ATP = 3-O-(5'-adenylyl)-L-seryl-[protein] + diphosphate. It carries out the reaction L-threonyl-[protein] + ATP = 3-O-(5'-adenylyl)-L-threonyl-[protein] + diphosphate. The catalysed reaction is L-tyrosyl-[protein] + ATP = O-(5'-adenylyl)-L-tyrosyl-[protein] + diphosphate. The enzyme catalyses L-histidyl-[protein] + UTP = N(tele)-(5'-uridylyl)-L-histidyl-[protein] + diphosphate. It catalyses the reaction L-seryl-[protein] + UTP = O-(5'-uridylyl)-L-seryl-[protein] + diphosphate. It carries out the reaction L-tyrosyl-[protein] + UTP = O-(5'-uridylyl)-L-tyrosyl-[protein] + diphosphate. Nucleotidyltransferase involved in the post-translational modification of proteins. It can catalyze the addition of adenosine monophosphate (AMP) or uridine monophosphate (UMP) to a protein, resulting in modifications known as AMPylation and UMPylation. This chain is Protein nucleotidyltransferase YdiU, found in Dechloromonas aromatica (strain RCB).